A 298-amino-acid polypeptide reads, in one-letter code: ATP-dependent Clp protease proteolytic subunit 5, chloroplastic (298 aa).

Residues 1–100 (MAHACVSTSA…SSPYFPAYAQ (100 aa)) constitute a chloroplast transit peptide. N-acetylglycine is present on Gly-101. Ser-193 functions as the Nucleophile in the catalytic mechanism. The active site involves His-218.

It belongs to the peptidase S14 family. As to quaternary structure, component of the chloroplastic Clp protease core complex which consist of at least 16 proteins: CLPP4 (3 copies), CLPP5 (3 copies), CLPR4 (2 copies), ClpP1 (1 copy), CLPP6 (1 copy), CLPR2 (1 copy), CLPT1 (1 copy), CLPT2 (1 copy) and 3 copies of CLPP3 and/or CLPR1 and/or CLPR3. The core complex is organized in two heptameric rings, one containing CLPP3,4,5,6 in a 1:2:3:1 ratio and the other CLPP1 and CLPR1,2,3,4 in a 3:1:1:1:1 ratio. Interacts with CHIP. Ubiquitinated in vitro by CHIP. As to expression, mostly expressed in leaves. Also detected in stems, and to a lower extent, in roots (at protein level).

The protein resides in the plastid. It localises to the chloroplast stroma. It catalyses the reaction Hydrolysis of proteins to small peptides in the presence of ATP and magnesium. alpha-casein is the usual test substrate. In the absence of ATP, only oligopeptides shorter than five residues are hydrolyzed (such as succinyl-Leu-Tyr-|-NHMec, and Leu-Tyr-Leu-|-Tyr-Trp, in which cleavage of the -Tyr-|-Leu- and -Tyr-|-Trp bonds also occurs).. In terms of biological role, cleaves peptides in various proteins in a process that requires ATP hydrolysis. Has a chymotrypsin-like activity. Plays a major role in the degradation of misfolded proteins. The protein is ATP-dependent Clp protease proteolytic subunit 5, chloroplastic of Arabidopsis thaliana (Mouse-ear cress).